Here is a 570-residue protein sequence, read N- to C-terminus: Endo-1,4-beta-xylanase 5-like (570 aa).

Positions 1–23 are cleaved as a signal peptide; the sequence is MNSIKNGFFLCMIFLLWCHVDSG. Residues N197, N261, and N307 are each glycosylated (N-linked (GlcNAc...) asparagine). The 300-residue stretch at 202–501 folds into the GH10 domain; it reads KGVVISLKQT…TQTGDVIDKL (300 aa). Residue E332 is the Proton donor of the active site. Residue N346 is glycosylated (N-linked (GlcNAc...) asparagine). E439 functions as the Nucleophile in the catalytic mechanism. N490, N515, N537, and N545 each carry an N-linked (GlcNAc...) asparagine glycan.

Belongs to the glycosyl hydrolase 10 (cellulase F) family.

It catalyses the reaction Endohydrolysis of (1-&gt;4)-beta-D-xylosidic linkages in xylans.. The protein operates within glycan degradation; xylan degradation. In terms of biological role, binds to and hydrolyzes insoluble and soluble xylan substrates. This chain is Endo-1,4-beta-xylanase 5-like, found in Arabidopsis thaliana (Mouse-ear cress).